Here is a 149-residue protein sequence, read N- to C-terminus: Probable microsomal glutathione S-transferase (149 aa).

Helical transmembrane passes span 7-27 and 123-143; these read SIFP…IGLW and LSHI…GSSL.

It belongs to the MAPEG family.

It localises to the membrane. The catalysed reaction is RX + glutathione = an S-substituted glutathione + a halide anion + H(+). May perform the conjugation of reduced glutathione to electrophiles. The protein is Probable microsomal glutathione S-transferase (mgst) of Dictyostelium discoideum (Social amoeba).